A 211-amino-acid polypeptide reads, in one-letter code: Thiamine-phosphate synthase (211 aa).

4-amino-2-methyl-5-(diphosphooxymethyl)pyrimidine contacts are provided by residues 41 to 45 (QYRDK) and N73. Positions 74 and 93 each coordinate Mg(2+). T112 contacts 4-amino-2-methyl-5-(diphosphooxymethyl)pyrimidine. 139–141 (SPT) is a binding site for 2-[(2R,5Z)-2-carboxy-4-methylthiazol-5(2H)-ylidene]ethyl phosphate. K142 is a binding site for 4-amino-2-methyl-5-(diphosphooxymethyl)pyrimidine. Residues G169 and 189–190 (VS) each bind 2-[(2R,5Z)-2-carboxy-4-methylthiazol-5(2H)-ylidene]ethyl phosphate.

This sequence belongs to the thiamine-phosphate synthase family. Mg(2+) serves as cofactor.

It carries out the reaction 2-[(2R,5Z)-2-carboxy-4-methylthiazol-5(2H)-ylidene]ethyl phosphate + 4-amino-2-methyl-5-(diphosphooxymethyl)pyrimidine + 2 H(+) = thiamine phosphate + CO2 + diphosphate. The catalysed reaction is 2-(2-carboxy-4-methylthiazol-5-yl)ethyl phosphate + 4-amino-2-methyl-5-(diphosphooxymethyl)pyrimidine + 2 H(+) = thiamine phosphate + CO2 + diphosphate. It catalyses the reaction 4-methyl-5-(2-phosphooxyethyl)-thiazole + 4-amino-2-methyl-5-(diphosphooxymethyl)pyrimidine + H(+) = thiamine phosphate + diphosphate. It functions in the pathway cofactor biosynthesis; thiamine diphosphate biosynthesis; thiamine phosphate from 4-amino-2-methyl-5-diphosphomethylpyrimidine and 4-methyl-5-(2-phosphoethyl)-thiazole: step 1/1. In terms of biological role, condenses 4-methyl-5-(beta-hydroxyethyl)thiazole monophosphate (THZ-P) and 2-methyl-4-amino-5-hydroxymethyl pyrimidine pyrophosphate (HMP-PP) to form thiamine monophosphate (TMP). The protein is Thiamine-phosphate synthase of Thioalkalivibrio sulfidiphilus (strain HL-EbGR7).